The sequence spans 212 residues: MDPSGPGPSSAAAGGAPAVAAAPQPPAQLSRYESQKRRDWNTFLQYLRNHRPPLTLARCSGAHVIEFLRYLDQFGKTKVHASGCAFYGQPSPPGPCPCPLRQAWGSLDALIGRLRAAYEESGGTPESNPFAARAVRIYLREVRDSQAKARGIPYEKKKRKRSQAAQPAGVEPSGSSSAAAAAAGGGDTGSGGGAAATTTAQPGGSGTAPSAS.

Over residues 1–22 (MDPSGPGPSSAAAGGAPAVAAA) the composition is skewed to low complexity. Disordered regions lie at residues 1 to 34 (MDPS…RYES) and 148 to 212 (KARG…PSAS). The ALOG domain maps to 31–158 (RYESQKRRDW…ARGIPYEKKK (128 aa)). Residues 156-160 (KKKRK) carry the Nuclear localization signal motif. Low complexity predominate over residues 173 to 182 (SGSSSAAAAA). A compositionally biased stretch (gly residues) spans 183-194 (AGGGDTGSGGGA).

This sequence belongs to the plant homeotic and developmental regulators ALOG protein family.

Its subcellular location is the nucleus. Its function is as follows. Probable transcription regulator that acts as a developmental regulator by promoting cell growth in response to light. This chain is Protein G1-like7, found in Oryza sativa subsp. indica (Rice).